Reading from the N-terminus, the 37-residue chain is Dolichyl-diphosphooligosaccharide--protein glycosyltransferase subunit 4A (37 aa).

Topologically, residues 1–7 (MIDDQDL) are lumenal. The helical transmembrane segment at 8–28 (GFIANFLGIFIFALVIAYHYV) threads the bilayer. The Cytoplasmic segment spans residues 29-37 (TADPKYEAT).

Belongs to the OST4 family. Component of the oligosaccharyltransferase (OST) complex.

It is found in the endoplasmic reticulum membrane. Subunit of the oligosaccharyl transferase (OST) complex that catalyzes the initial transfer of a defined glycan (Glc(3)Man(9)GlcNAc(2) in eukaryotes) from the lipid carrier dolichol-pyrophosphate to an asparagine residue within an Asn-X-Ser/Thr consensus motif in nascent polypeptide chains, the first step in protein N-glycosylation. N-glycosylation occurs cotranslationally and the complex associates with the Sec61 complex at the channel-forming translocon complex that mediates protein translocation across the endoplasmic reticulum (ER). All subunits are required for a maximal enzyme activity. This is Dolichyl-diphosphooligosaccharide--protein glycosyltransferase subunit 4A (OST4A) from Arabidopsis thaliana (Mouse-ear cress).